The primary structure comprises 502 residues: Cytochrome P450 71A1 (502 aa).

Residues 7 to 21 (LLFLAIALTFFLLKL) traverse the membrane as a helical segment. C443 provides a ligand contact to heme.

Belongs to the cytochrome P450 family. Heme serves as cofactor. Mesocarp.

The protein localises to the microsome membrane. The protein resides in the endoplasmic reticulum membrane. Involved in the metabolism of compounds associated with the development of flavor in the ripening fruit process, possibly by acting as trans-cinnamic acid 4-hydrolase. The sequence is that of Cytochrome P450 71A1 (CYP71A1) from Persea americana (Avocado).